Here is a 214-residue protein sequence, read N- to C-terminus: MASLKSIIRQGKQRRSDLTAIRNSGKVPAVMYGYGQKNVSVKVDEVEFIKVIREVGRNGVIDLGVGSKTIKVMVADYQFDPLKNQITHIDFLAINMSEERTVEVPVHLVGEAVGAKEGGVVDQPLFNLEVTATPENIPEYLEVEISGLEIGDSLSVADLNTTGDFTIENEPEATVVTVVPPTQGPSEAEIEEVEAGDADTPEPEVVGEKEEDEE.

A disordered region spans residues 179 to 214; that stretch reads VPPTQGPSEAEIEEVEAGDADTPEPEVVGEKEEDEE. The span at 188-202 shows a compositional bias: acidic residues; sequence AEIEEVEAGDADTPE.

It belongs to the bacterial ribosomal protein bL25 family. CTC subfamily. Part of the 50S ribosomal subunit; part of the 5S rRNA/L5/L18/L25 subcomplex. Contacts the 5S rRNA. Binds to the 5S rRNA independently of L5 and L18.

Its function is as follows. This is one of the proteins that binds to the 5S RNA in the ribosome where it forms part of the central protuberance. The polypeptide is Large ribosomal subunit protein bL25 (Staphylococcus carnosus (strain TM300)).